A 425-amino-acid polypeptide reads, in one-letter code: Serine--tRNA ligase 2 (425 aa).

An L-serine-binding site is contributed by 230 to 232; the sequence is TAE. Residue 261-263 participates in ATP binding; the sequence is REE. Glutamate 284 contributes to the L-serine binding site. Position 348-351 (348-351) interacts with ATP; it reads EISS. Serine 383 contributes to the L-serine binding site.

Belongs to the class-II aminoacyl-tRNA synthetase family. Type-1 seryl-tRNA synthetase subfamily. As to quaternary structure, homodimer. The tRNA molecule binds across the dimer.

It is found in the cytoplasm. The catalysed reaction is tRNA(Ser) + L-serine + ATP = L-seryl-tRNA(Ser) + AMP + diphosphate + H(+). It carries out the reaction tRNA(Sec) + L-serine + ATP = L-seryl-tRNA(Sec) + AMP + diphosphate + H(+). Its pathway is aminoacyl-tRNA biosynthesis; selenocysteinyl-tRNA(Sec) biosynthesis; L-seryl-tRNA(Sec) from L-serine and tRNA(Sec): step 1/1. Catalyzes the attachment of serine to tRNA(Ser). Is also able to aminoacylate tRNA(Sec) with serine, to form the misacylated tRNA L-seryl-tRNA(Sec), which will be further converted into selenocysteinyl-tRNA(Sec). This is Serine--tRNA ligase 2 from Lactiplantibacillus plantarum (strain ATCC BAA-793 / NCIMB 8826 / WCFS1) (Lactobacillus plantarum).